Here is a 547-residue protein sequence, read N- to C-terminus: Cytochrome P450 monooxygenase 81 (547 aa).

Helical transmembrane passes span Ile6 to Leu23 and Ala106 to Gly124. Heme is bound at residue Cys483. 2 N-linked (GlcNAc...) asparagine glycosylation sites follow: Asn503 and Asn516.

The protein belongs to the cytochrome P450 family. The cofactor is heme.

It is found in the membrane. Its pathway is secondary metabolite biosynthesis. Its function is as follows. Cytochrome P450 monooxygenase that is able to use dehydroabietic acid as a substrate for oxidation. The sequence is that of Cytochrome P450 monooxygenase 81 from Postia placenta (strain ATCC 44394 / Madison 698-R) (Brown rot fungus).